The sequence spans 263 residues: 3-deoxy-manno-octulosonate cytidylyltransferase (263 aa).

Belongs to the KdsB family.

The protein resides in the cytoplasm. It carries out the reaction 3-deoxy-alpha-D-manno-oct-2-ulosonate + CTP = CMP-3-deoxy-beta-D-manno-octulosonate + diphosphate. The protein operates within nucleotide-sugar biosynthesis; CMP-3-deoxy-D-manno-octulosonate biosynthesis; CMP-3-deoxy-D-manno-octulosonate from 3-deoxy-D-manno-octulosonate and CTP: step 1/1. It participates in bacterial outer membrane biogenesis; lipopolysaccharide biosynthesis. Functionally, activates KDO (a required 8-carbon sugar) for incorporation into bacterial lipopolysaccharide in Gram-negative bacteria. The protein is 3-deoxy-manno-octulosonate cytidylyltransferase of Burkholderia multivorans (strain ATCC 17616 / 249).